Consider the following 106-residue polypeptide: Small ribosomal subunit protein uS10 (106 aa).

The protein belongs to the universal ribosomal protein uS10 family. As to quaternary structure, part of the 30S ribosomal subunit.

In terms of biological role, involved in the binding of tRNA to the ribosomes. The polypeptide is Small ribosomal subunit protein uS10 (Pyrobaculum calidifontis (strain DSM 21063 / JCM 11548 / VA1)).